A 131-amino-acid chain; its full sequence is QADGAKIYAQCAGCHQQNGQGIPGAFPPLAGHVAEILAKEGGREYLILVLLYGLQGQIEVKGMKYNGVMSSFAQLKDEEIAAVLNHIATAWGDAKKVKGFKPFTAEEVKKLRAKKLTPQQVLAERKKLGLK.

Residues Cys-11, Cys-14, His-15, and Met-69 each coordinate heme c.

Post-translationally, binds 1 heme c group covalently per subunit.

In terms of biological role, this monoheme basic protein appears to function as an electron donor to cytochrome oxidase in T.thermophilus. The protein is Cytochrome c-552 (cycA) of Thermus thermophilus.